The sequence spans 154 residues: Proteinase inhibitor type-2 P303.51 (154 aa).

Residues 1–25 form the signal peptide; it reads MAVHKEVNFVAYLLIVLGLLVLVSA. Repeat copies occupy residues 31 to 87 and 88 to 147. Cystine bridges form between C34/C122, C38/C118, C46/C128, C58/C95, C61/C79, C62/C91, C68/C104, and C121/C139.

The protein belongs to the protease inhibitor I20 (potato type II proteinase inhibitor) family.

This chain is Proteinase inhibitor type-2 P303.51, found in Solanum tuberosum (Potato).